The following is a 288-amino-acid chain: THO complex subunit 4D (288 aa).

The tract at residues methionine 1–proline 55 is disordered. Serine 2 carries the N-acetylserine modification. In terms of domain architecture, RRM spans threonine 93–glycine 170. A disordered region spans residues glutamine 201 to serine 288. Positions glutamine 232 to glycine 260 are enriched in gly residues. The segment covering lysine 264–histidine 281 has biased composition (basic and acidic residues).

It belongs to the ALYREF family. In terms of assembly, interacts with PARP1. Interacts with EIF4A3.

The protein localises to the nucleus. It is found in the nucleoplasm. Its subcellular location is the nucleolus. Export adapter involved in nuclear export of spliced and unspliced mRNA. Plays a role in disease resistance. Mediates multiple defense responses triggered by NEP1, including stomatal closure, hypersensitive cell death (HCD) and defense-related gene expression. The polypeptide is THO complex subunit 4D (Arabidopsis thaliana (Mouse-ear cress)).